A 105-amino-acid polypeptide reads, in one-letter code: PTS system lactose-specific EIIA component (105 aa).

The 99-residue stretch at 4–102 (EEMTLLGFEI…IHHLIELYKR (99 aa)) folds into the PTS EIIA type-3 domain. His78 functions as the Tele-phosphohistidine intermediate in the catalytic mechanism. Position 78 is a phosphohistidine; by HPr (His78). Asp81 contributes to the Mg(2+) binding site.

In terms of assembly, homotrimer. Mg(2+) is required as a cofactor.

Its subcellular location is the cytoplasm. Functionally, the phosphoenolpyruvate-dependent sugar phosphotransferase system (sugar PTS), a major carbohydrate active transport system, catalyzes the phosphorylation of incoming sugar substrates concomitantly with their translocation across the cell membrane. The enzyme II LacEF PTS system is involved in lactose transport. This chain is PTS system lactose-specific EIIA component, found in Lactococcus lactis subsp. lactis (Streptococcus lactis).